Here is a 903-residue protein sequence, read N- to C-terminus: Glutamate receptor ionotropic, NMDA 1 (903 aa).

The signal sequence occupies residues 1-20 (MGTMRLFLLAVLFLFSFARA). The Extracellular segment spans residues 21–557 (GCDPKIVNIG…TLDSFMQPFQ (537 aa)). N-linked (GlcNAc...) asparagine glycosylation is found at N61, N203, N276, N300, N350, N368, N440, N469, and N489. Cysteines 79 and 308 form a disulfide. Disulfide bonds link C420–C452 and C436–C453. 3 residues coordinate glycine: P514, T516, and R521. A helical transmembrane segment spans residues 558–578 (STLWLLVGLSVHVVAVMLYLL). Topologically, residues 579–600 (DRFSPFGRFKVNSEEEEEDALT) are cytoplasmic. The segment at 601–620 (LSSAMWFSWGVLLNSGIGEG) is pore-forming. The discontinuously helical intramembrane region spans 601-622 (LSSAMWFSWGVLLNSGIGEGAP). Over 623-628 (RSFSAR) the chain is Cytoplasmic. A helical membrane pass occupies residues 629-645 (ILGMVWAGFAMIIVASY). Residues 646–810 (TANLAAFLVL…NAPATLTFEN (165 aa)) lie on the Extracellular side of the membrane. The glycine site is built by S686 and D730. Residues C742 and C796 are joined by a disulfide bond. An N-linked (GlcNAc...) asparagine glycan is attached at N769. The chain crosses the membrane as a helical span at residues 811-831 (MAGVFMLVAGGIVAGIFLIFI). The Cytoplasmic portion of the chain corresponds to 832–903 (EIAYKRHKDA…SSKDTVNVVV (72 aa)).

It belongs to the glutamate-gated ion channel (TC 1.A.10.1) family. NR1/GRIN1 subfamily. As to quaternary structure, heterotetramer; the NMDAR subunits are modular and harbor tiered domains that function in concert to regulate opening and closing of the cation-selective ion channel pore. Forms heterotetrameric channels composed of two GluN1/zeta subunits (GRIN1), and two identical GluN2/epsilon subunits (GRIN2A, GRIN2B, GRIN2C or GRIN2D) or GluN3 subunits (GRIN3A or GRIN3B) (in vitro). Does not form functional channels by itself. Can also form heterotetrameric channels that contain at least two GluN1 subunits and at least two different GluN2 subunits (or a combination of one GluN2 and one GluN3 subunits) (in vitro). In vivo, the subunit composition may vary in function of the expression levels of the different subunits.

Its subcellular location is the cell membrane. The protein resides in the postsynaptic cell membrane. It localises to the postsynaptic density membrane. The protein localises to the synaptic cell membrane. The enzyme catalyses Ca(2+)(in) = Ca(2+)(out). It catalyses the reaction Na(+)(in) = Na(+)(out). It carries out the reaction K(+)(in) = K(+)(out). Its activity is regulated as follows. NMDA glutamate receptor activity is modulated by zinc ions. The NMDA glutamate receptor activity of the heterotetramer with grin2b is stimulated by micromolar levels of Zn(2+). The NMDA glutamate receptor activity of the heterotetramer with grin2a is inhibited by nanomolar levels of Zn(2+). In terms of biological role, component of N-methyl-D-aspartate (NMDA) receptors (NMDARs) that function as heterotetrameric, ligand-gated cation channels with high calcium permeability and voltage-dependent block by Mg(2+). NMDARs participate in synaptic plasticity. Channel activation requires binding of the neurotransmitter L-glutamate to the GluN2 subunit, glycine binding to the GluN1 subunit, plus membrane depolarization to eliminate channel inhibition by Mg(2+). NMDARs mediate simultaneously the potasium efflux and the influx of calcium and sodium. Each GluN2 or GluN3 subunit confers differential attributes to channel properties, including activation, deactivation and desensitization kinetics, pH sensitivity, Ca2(+) permeability, and binding to allosteric modulators. The polypeptide is Glutamate receptor ionotropic, NMDA 1 (Xenopus laevis (African clawed frog)).